A 273-amino-acid polypeptide reads, in one-letter code: Undecaprenyl-diphosphatase (273 aa).

Transmembrane regions (helical) follow at residues 6–26 (SLLI…LPVS), 45–65 (AKTF…VMFW), 90–110 (LTLI…LLFH), 116–136 (LFNP…LIAA), 190–210 (YAAS…ATAL), 222–242 (GDIP…LIAI), and 252–272 (ISFI…YVVF).

It belongs to the UppP family.

The protein resides in the cell inner membrane. It catalyses the reaction di-trans,octa-cis-undecaprenyl diphosphate + H2O = di-trans,octa-cis-undecaprenyl phosphate + phosphate + H(+). In terms of biological role, catalyzes the dephosphorylation of undecaprenyl diphosphate (UPP). Confers resistance to bacitracin. This chain is Undecaprenyl-diphosphatase, found in Escherichia coli O7:K1 (strain IAI39 / ExPEC).